Here is a 207-residue protein sequence, read N- to C-terminus: Putative tributyltin chloride resistance protein (207 aa).

The tract at residues 37–122 (NLPIELALMP…YHAIAALNLG (86 aa)) is slt-type domain. Glu-49 is a catalytic residue.

This sequence belongs to the transglycosylase Slt family.

The protein is Putative tributyltin chloride resistance protein (tbtA) of Alteromonas sp. (strain M-1).